A 275-amino-acid chain; its full sequence is NAD kinase (275 aa).

Aspartate 68 (proton acceptor) is an active-site residue. Residues 68–69 (DG), arginine 73, 136–137 (NE), lysine 147, arginine 164, aspartate 166, 177–182 (TAYAMS), alanine 201, and glutamine 236 contribute to the NAD(+) site.

Belongs to the NAD kinase family. The cofactor is a divalent metal cation.

Its subcellular location is the cytoplasm. It catalyses the reaction NAD(+) + ATP = ADP + NADP(+) + H(+). In terms of biological role, involved in the regulation of the intracellular balance of NAD and NADP, and is a key enzyme in the biosynthesis of NADP. Catalyzes specifically the phosphorylation on 2'-hydroxyl of the adenosine moiety of NAD to yield NADP. The polypeptide is NAD kinase (Methanosarcina barkeri (strain Fusaro / DSM 804)).